A 546-amino-acid chain; its full sequence is Protein RDR1 (546 aa).

Residues 20 to 46 (CVPCRERKRKCNGKSPCEMCVAYGYVC) constitute a DNA-binding region (zn(2)-C6 fungal-type).

Its subcellular location is the nucleus. Transcriptional repressor of multidrug resistance genes, such as PDR5. Required for growth on non-fermentable carbon sources like lactate or glycerol. This chain is Protein RDR1 (RDR1), found in Saccharomyces cerevisiae (strain ATCC 204508 / S288c) (Baker's yeast).